The following is a 312-amino-acid chain: Isethionate sulfite-lyase activating enzyme (312 aa).

Residues His22–Glu309 form the Radical SAM core domain. Residues Cys36, Cys40, Cys43, Cys62, Cys65, Cys68, Cys72, Cys92, Cys95, Cys100, and Cys104 each contribute to the [4Fe-4S] cluster site. S-adenosyl-L-methionine is bound at residue Trp42–Ser44. 2 4Fe-4S ferredoxin-type domains span residues Pro53–Asp82 and Gly83–Asn115. Residues Gly144, Asp193 to Lys195, and His267 contribute to the S-adenosyl-L-methionine site.

Belongs to the organic radical-activating enzymes family. Monomer. [4Fe-4S] cluster is required as a cofactor.

The enzyme catalyses glycyl-[protein] + reduced [flavodoxin] + S-adenosyl-L-methionine = glycin-2-yl radical-[protein] + semiquinone [flavodoxin] + 5'-deoxyadenosine + L-methionine + H(+). Its pathway is organosulfur degradation; alkanesulfonate degradation. Its function is as follows. Involved in an anaerobic respiration pathway that converts the sulfonate taurine (2-aminoethanesulfonate) to ammonia, acetate and sulfide. Catalyzes activation of the isethionate sulfite-lyase IslA under anaerobic conditions by generation of an organic free radical on a glycine residue, via a homolytic cleavage of S-adenosyl-L-methionine (SAM). The protein is Isethionate sulfite-lyase activating enzyme of Bilophila wadsworthia (strain 3_1_6).